A 530-amino-acid chain; its full sequence is Cytochrome P450 2U1 (530 aa).

The next 4 membrane-spanning stretches (helical) occupy residues 21–41 (LQAV…DWVW), 99–119 (VYGN…LSDF), 247–267 (ICLH…YLPF), and 328–348 (LFYI…NSLL). Cys476 provides a ligand contact to heme. A helical transmembrane segment spans residues 481 to 501 (LAKMELFLMFVSLMQSFTFAL).

This sequence belongs to the cytochrome P450 family. Heme serves as cofactor. In terms of tissue distribution, specifically expressed in thymus and brain. In brain, expressed in cortex, cerebellum, olfactory bulbs, pons and medulla and the limbic structures (at protein level).

Its subcellular location is the endoplasmic reticulum membrane. It is found in the microsome membrane. The protein resides in the mitochondrion inner membrane. It carries out the reaction an omega-methyl-long-chain fatty acid + reduced [NADPH--hemoprotein reductase] + O2 = an omega-hydroxy-long-chain fatty acid + oxidized [NADPH--hemoprotein reductase] + H2O + H(+). The enzyme catalyses (5Z,8Z,11Z,14Z)-eicosatetraenoate + reduced [NADPH--hemoprotein reductase] + O2 = 19-hydroxy-(5Z,8Z,11Z,14Z)-eicosatetraenoate + oxidized [NADPH--hemoprotein reductase] + H2O + H(+). It catalyses the reaction (5Z,8Z,11Z,14Z)-eicosatetraenoate + reduced [NADPH--hemoprotein reductase] + O2 = 20-hydroxy-(5Z,8Z,11Z,14Z)-eicosatetraenoate + oxidized [NADPH--hemoprotein reductase] + H2O + H(+). The catalysed reaction is N-[(5Z,8Z,11Z,14Z)-eicosatetraenoyl]-serotonin + reduced [NADPH--hemoprotein reductase] + O2 = 2-oxo-N-[(5Z,8Z,11Z,14Z)-eicosatetraenoyl]-serotonin + oxidized [NADPH--hemoprotein reductase] + H2O + H(+). In terms of biological role, a cytochrome P450 monooxygenase involved in the metabolism of arachidonic acid and its conjugates. Mechanistically, uses molecular oxygen inserting one oxygen atom into a substrate, and reducing the second into a water molecule, with two electrons provided by NADPH via cytochrome P450 reductase (CPR; NADPH-ferrihemoprotein reductase). Acts as an omega and omega-1 hydroxylase for arachidonic acid and possibly for other long chain fatty acids. May modulate the arachidonic acid signaling pathway and play a role in other fatty acid signaling processes. May down-regulate the biological activities of N-arachidonoyl-serotonin, an endocannabinoid that has anti-nociceptive effects through inhibition of fatty acid amide hydrolase FAAH, TRPV1 receptor and T-type calcium channels. Catalyzes C-2 oxidation of the indole ring of N-arachidonoyl-serotonin forming a less active product 2-oxo-N-arachidonoyl-serotonin. The polypeptide is Cytochrome P450 2U1 (Cyp2u1) (Rattus norvegicus (Rat)).